We begin with the raw amino-acid sequence, 612 residues long: BTB/POZ domain-containing protein 9 (612 aa).

One can recognise a BTB domain in the interval 36-104 (GDVTFVVEKK…IYTGRATLTD (69 aa)). The 99-residue stretch at 142 to 240 (VCMTFDVASL…SLTELLNVVR (99 aa)) folds into the BACK domain. The segment at 559–612 (QQSTQKEDSSEEPGTGDLSTPSQQLDPHAPRAPSASSLPPSPGPNLHSPNQQNQ) is disordered. A compositionally biased stretch (low complexity) spans 589–612 (RAPSASSLPPSPGPNLHSPNQQNQ).

In terms of tissue distribution, detected throughout the gray matter of the spinal cord including the motor neurons (at protein level). In the brain, detected in the neurons of the hippocampus and in the Purkinje cells of the cerebellum (at protein level). Also detected in the terospenial cortex, bed nucleus of the stria terminalis (BST) and the ventrolateral thalamus (VL) (at protein level).

This chain is BTB/POZ domain-containing protein 9 (Btbd9), found in Rattus norvegicus (Rat).